The primary structure comprises 402 residues: MVDIADEMKPADKVRNFQINFGPQHPAAHGVLRLVLELDGEVVERVDPHIGLLHRGTEKLIEAKTYLQAVPYFDRLDYCAPMNQEHAFCLAAEKLLGIEVPKRGQLIRVLYSEIGRLLSHLLNVTTFAMDVGALTPPLWGFEEREKLMIFYERASGSRMHAAYFRPGGVHQDLPRALVEDIGAFCDPFLKLLDDLDGLVTENRIFKQRTVDIGVVSLEDALAWGFSGVMVRGSGAAWDLRRAQPYECYSELDFDIPIGKHGDCYDRYVVRMEEMRQSTKIMKQCVERLLKEAGPVSTTDNKIVPPKRGEMKRSMEALIHHFKLYTEGFHVPAGDVYAAVEAPKGEFGVYLVSDGTNKPYRCKIRAPGFAHLQAMDFLCRGHMLADVSAVLGSLDIVFGEVDR.

This sequence belongs to the complex I 49 kDa subunit family. As to quaternary structure, NDH-1 is composed of 14 different subunits. Subunits NuoB, C, D, E, F, and G constitute the peripheral sector of the complex.

It is found in the cell inner membrane. It carries out the reaction a quinone + NADH + 5 H(+)(in) = a quinol + NAD(+) + 4 H(+)(out). Its function is as follows. NDH-1 shuttles electrons from NADH, via FMN and iron-sulfur (Fe-S) centers, to quinones in the respiratory chain. The immediate electron acceptor for the enzyme in this species is believed to be ubiquinone. Couples the redox reaction to proton translocation (for every two electrons transferred, four hydrogen ions are translocated across the cytoplasmic membrane), and thus conserves the redox energy in a proton gradient. This chain is NADH-quinone oxidoreductase subunit D, found in Xanthobacter autotrophicus (strain ATCC BAA-1158 / Py2).